Reading from the N-terminus, the 379-residue chain is Glutamate 5-kinase (379 aa).

Lys-15 lines the ATP pocket. Substrate-binding residues include Ser-59, Asp-146, and Asn-158. 178–179 (TD) contacts ATP. The 79-residue stretch at 285 to 363 (RGAVTVDVGA…SEFERLLGYS (79 aa)) folds into the PUA domain.

The protein belongs to the glutamate 5-kinase family.

Its subcellular location is the cytoplasm. The catalysed reaction is L-glutamate + ATP = L-glutamyl 5-phosphate + ADP. Its pathway is amino-acid biosynthesis; L-proline biosynthesis; L-glutamate 5-semialdehyde from L-glutamate: step 1/2. In terms of biological role, catalyzes the transfer of a phosphate group to glutamate to form L-glutamate 5-phosphate. The chain is Glutamate 5-kinase from Paracidovorax citrulli (strain AAC00-1) (Acidovorax citrulli).